Consider the following 113-residue polypeptide: T cell receptor alpha variable 5 (113 aa).

The first 22 residues, 1-22, serve as a signal peptide directing secretion; that stretch reads MKTFAGFSFLFLWLQLDCMSRG. The Ig-like domain maps to 23–113; sequence EDVEQSLFLS…DSAIYFCAES (91 aa). N42 is a glycosylation site (N-linked (GlcNAc...) asparagine). C43 and C110 are disulfide-bonded.

As to quaternary structure, alpha-beta TR is a heterodimer composed of an alpha and beta chain; disulfide-linked. The alpha-beta TR is associated with the transmembrane signaling CD3 coreceptor proteins to form the TR-CD3 (TcR or TCR). The assembly of alpha-beta TR heterodimers with CD3 occurs in the endoplasmic reticulum where a single alpha-beta TR heterodimer associates with one CD3D-CD3E heterodimer, one CD3G-CD3E heterodimer and one CD247 homodimer forming a stable octameric structure. CD3D-CD3E and CD3G-CD3E heterodimers preferentially associate with TR alpha and TR beta chains, respectively. The association of the CD247 homodimer is the last step of TcR assembly in the endoplasmic reticulum and is required for transport to the cell surface.

The protein resides in the cell membrane. In terms of biological role, v region of the variable domain of T cell receptor (TR) alpha chain that participates in the antigen recognition. Alpha-beta T cell receptors are antigen specific receptors which are essential to the immune response and are present on the cell surface of T lymphocytes. Recognize peptide-major histocompatibility (MH) (pMH) complexes that are displayed by antigen presenting cells (APC), a prerequisite for efficient T cell adaptive immunity against pathogens. Binding of alpha-beta TR to pMH complex initiates TR-CD3 clustering on the cell surface and intracellular activation of LCK that phosphorylates the ITAM motifs of CD3G, CD3D, CD3E and CD247 enabling the recruitment of ZAP70. In turn ZAP70 phosphorylates LAT, which recruits numerous signaling molecules to form the LAT signalosome. The LAT signalosome propagates signal branching to three major signaling pathways, the calcium, the mitogen-activated protein kinase (MAPK) kinase and the nuclear factor NF-kappa-B (NF-kB) pathways, leading to the mobilization of transcription factors that are critical for gene expression and essential for T cell growth and differentiation. The T cell repertoire is generated in the thymus, by V-(D)-J rearrangement. This repertoire is then shaped by intrathymic selection events to generate a peripheral T cell pool of self-MH restricted, non-autoaggressive T cells. Post-thymic interaction of alpha-beta TR with the pMH complexes shapes TR structural and functional avidity. The chain is T cell receptor alpha variable 5 from Homo sapiens (Human).